A 147-amino-acid polypeptide reads, in one-letter code: Protein-export protein SecB 2 (147 aa).

The protein belongs to the SecB family. In terms of assembly, homotetramer, a dimer of dimers. One homotetramer interacts with 1 SecA dimer.

It is found in the cytoplasm. In terms of biological role, one of the proteins required for the normal export of preproteins out of the cell cytoplasm. It is a molecular chaperone that binds to a subset of precursor proteins, maintaining them in a translocation-competent state. It also specifically binds to its receptor SecA. This Francisella tularensis subsp. holarctica (strain FTNF002-00 / FTA) protein is Protein-export protein SecB 2.